We begin with the raw amino-acid sequence, 731 residues long: Cell death abnormality protein 12 (731 aa).

The 147-residue stretch at 339-485 folds into the ELMO domain; the sequence is AEVQKILDIE…VVLEQLRHVL (147 aa). A PH domain is found at 544–679; it reads VRINHLNYLK…WLEGLAELIG (136 aa). The SH3-binding motif lies at 715–718; sequence PEIP.

In terms of assembly, interacts with psr-1. Forms a ternary complex with ced-2 and ced-5.

The protein resides in the cytoplasm. Involved in programmed apoptosis and necrosis. Required for the cell corpse engulfment process. Has roles in the formation of actin halos and distal tip cell migration. Negatively regulates the unc-6/Netrin receptor unc-5 to control distal tip cell migration along the anterior-posterior axis of the body. Plays no role in amphid axon outgrowth. This Caenorhabditis elegans protein is Cell death abnormality protein 12.